A 391-amino-acid chain; its full sequence is Chalcone synthase (391 aa).

Residue Cys-164 is part of the active site.

This sequence belongs to the thiolase-like superfamily. Chalcone/stilbene synthases family.

It carries out the reaction (E)-4-coumaroyl-CoA + 3 malonyl-CoA + 3 H(+) = 2',4,4',6'-tetrahydroxychalcone + 3 CO2 + 4 CoA. Its pathway is secondary metabolite biosynthesis; flavonoid biosynthesis. The primary product of this enzyme is 4,2',4',6'-tetrahydroxychalcone (also termed naringenin-chalcone or chalcone) which can under specific conditions spontaneously isomerize into naringenin. The chain is Chalcone synthase (CHS) from Dianthus monspessulanus.